Reading from the N-terminus, the 145-residue chain is Large ribosomal subunit protein uL11 (145 aa).

This sequence belongs to the universal ribosomal protein uL11 family. In terms of assembly, part of the ribosomal stalk of the 50S ribosomal subunit. Interacts with L10 and the large rRNA to form the base of the stalk. L10 forms an elongated spine to which L12 dimers bind in a sequential fashion forming a multimeric L10(L12)X complex. One or more lysine residues are methylated.

Forms part of the ribosomal stalk which helps the ribosome interact with GTP-bound translation factors. This Rickettsia massiliae (strain Mtu5) protein is Large ribosomal subunit protein uL11.